Reading from the N-terminus, the 296-residue chain is Acetylglutamate kinase (296 aa).

Residues 67 to 68, Arg-89, and Asn-194 each bind substrate; that span reads GG.

It belongs to the acetylglutamate kinase family. ArgB subfamily.

Its subcellular location is the cytoplasm. The enzyme catalyses N-acetyl-L-glutamate + ATP = N-acetyl-L-glutamyl 5-phosphate + ADP. It participates in amino-acid biosynthesis; L-arginine biosynthesis; N(2)-acetyl-L-ornithine from L-glutamate: step 2/4. In terms of biological role, catalyzes the ATP-dependent phosphorylation of N-acetyl-L-glutamate. The chain is Acetylglutamate kinase from Syntrophus aciditrophicus (strain SB).